We begin with the raw amino-acid sequence, 229 residues long: 3,4-dihydroxy-2-butanone 4-phosphate synthase (229 aa).

D-ribulose 5-phosphate is bound by residues 28–29 (RE), D33, 164–168 (RGGHT), and E188. Mg(2+) is bound at residue E29. H167 contributes to the Mg(2+) binding site.

This sequence belongs to the DHBP synthase family. As to quaternary structure, homodimer. The cofactor is Mg(2+). Requires Mn(2+) as cofactor.

The enzyme catalyses D-ribulose 5-phosphate = (2S)-2-hydroxy-3-oxobutyl phosphate + formate + H(+). It participates in cofactor biosynthesis; riboflavin biosynthesis; 2-hydroxy-3-oxobutyl phosphate from D-ribulose 5-phosphate: step 1/1. Its function is as follows. Catalyzes the conversion of D-ribulose 5-phosphate to formate and 3,4-dihydroxy-2-butanone 4-phosphate. The sequence is that of 3,4-dihydroxy-2-butanone 4-phosphate synthase from Methanothermobacter thermautotrophicus (strain ATCC 29096 / DSM 1053 / JCM 10044 / NBRC 100330 / Delta H) (Methanobacterium thermoautotrophicum).